We begin with the raw amino-acid sequence, 211 residues long: N-(5'-phosphoribosyl)anthranilate isomerase (211 aa).

The protein belongs to the TrpF family.

It catalyses the reaction N-(5-phospho-beta-D-ribosyl)anthranilate = 1-(2-carboxyphenylamino)-1-deoxy-D-ribulose 5-phosphate. The protein operates within amino-acid biosynthesis; L-tryptophan biosynthesis; L-tryptophan from chorismate: step 3/5. The polypeptide is N-(5'-phosphoribosyl)anthranilate isomerase (Methanococcus maripaludis (strain C6 / ATCC BAA-1332)).